A 507-amino-acid polypeptide reads, in one-letter code: ATP synthase subunit alpha, chloroplastic (507 aa).

170–177 contacts ATP; it reads GDRQTGKT.

This sequence belongs to the ATPase alpha/beta chains family. In terms of assembly, F-type ATPases have 2 components, CF(1) - the catalytic core - and CF(0) - the membrane proton channel. CF(1) has five subunits: alpha(3), beta(3), gamma(1), delta(1), epsilon(1). CF(0) has four main subunits: a, b, b' and c.

Its subcellular location is the plastid. It localises to the chloroplast thylakoid membrane. It carries out the reaction ATP + H2O + 4 H(+)(in) = ADP + phosphate + 5 H(+)(out). In terms of biological role, produces ATP from ADP in the presence of a proton gradient across the membrane. The alpha chain is a regulatory subunit. In Gossypium hirsutum (Upland cotton), this protein is ATP synthase subunit alpha, chloroplastic.